The sequence spans 1038 residues: MAEENPGALAANVPYLGVDELGASVIVEPGLEGSNAGGRTLPAAAIKFADLTESGSESGDNEAEEPVSAGPDNANAIGEPGTSASAAEENGTVERNSPPPNCAICLSRCRRKCFTDSCMHQFCFKCLCEWSKIKPECPLCKQPFRTIIHNVRTLDDYDRYPVQTTSPVPTENPSLRYHIVRRPRYTPLVQNQAVIVNDIEAAIAAGAAGEDVLSAAEVAAGRRSYSRFEPYRSELMNYYQHDQDASTSGSLSQLWRRYVYDRKLYALPVSDSVTGHFREWSARFYRNNPAQIHRLMPWIHRDIMCLLRNAAHSVNTVMTLMSDLLPMTSLLGPTFRRRLSPYLGERTSHFIHELFNFARSPYDINGYDHVVQYSARVAEEVEVDLLDMVETQSSNGDDLNLEVGDSDADAINAGFSPDWSPPRVRPSTSVIVTNPGATHSFSVTMASDGSELPGISIRRTTNVGSQTVAINLSMRRPAAVASEEPEVIEIDDGDAAANAEVAAINDGSNTSRRHAGATLPVTAHIELESSSSSGDEDECVFVLELKPPHMRTPEQVSLDSNSDSDVVFVNEQHEAAPDAIAENRSTQSPLDLASRDQGLFMGPSTSGAAANRGKNWKLVMAQTRRLDQLRTLRSIRSKKSRRSSMPARSDSGSSPSSCSSSSFHFSSSSDEDSSDSSTTNSEPPKKKSRKRVANNKRSKKESIGKRTSRKRKAKDQNMEMLEQQQISQKKPQRQPESSSDSPSSSDDESGGDSSESSGQPNTNNNKSSSDSDDDSAVNMQLSALRATLKAEATLEDRKPVKLELQLPDDDQAGPLHSRMTPSPREDNEPGCSAPKRRRSCSHSNQSSQSASLASSSTATSSSAPLSSFAWGAAGFSGDPLMRGHPAMEEHDIANSLIELSTLTQPVNIGLFNEHYNSAENSMGMLSNTLCDSPQTLAADDANLENYFDTDADPEASRERDAYSLEAAIDVVGESELQIAEDTATATEEQDEEDEEDEDQEEDDQEEEKAAEEEEEEEEDDDDSDNHDENDENQGLLPY.

Positions 53–96 are disordered; sequence ESGSESGDNEAEEPVSAGPDNANAIGEPGTSASAAEENGTVERN. The segment at 102–141 adopts an RING-type zinc-finger fold; sequence CAICLSRCRRKCFTDSCMHQFCFKCLCEWSKIKPECPLCK. An interaction with hairy/hry region spans residues 495–682; that stretch reads AAANAEVAAI…SSDSSTTNSE (188 aa). Disordered stretches follow at residues 627–858 and 972–1038; these read DQLR…SSTA and GESE…LLPY. Positions 633 to 642 are enriched in basic residues; it reads RSIRSKKSRR. The span at 643–668 shows a compositional bias: low complexity; the sequence is SSMPARSDSGSSPSSCSSSSFHFSSS. Residues 686–699 show a composition bias toward basic residues; the sequence is KKSRKRVANNKRSK. A compositionally biased stretch (low complexity) spans 723–744; sequence QQQISQKKPQRQPESSSDSPSS. Over residues 792 to 801 the composition is skewed to basic and acidic residues; that stretch reads ATLEDRKPVK. A Phosphothreonine modification is found at T820. The residue at position 822 (S822) is a Phosphoserine. Over residues 841 to 858 the composition is skewed to low complexity; sequence SHSNQSSQSASLASSSTA. The span at 987–1031 shows a compositional bias: acidic residues; that stretch reads EEQDEEDEEDEDQEEDDQEEEKAAEEEEEEEEDDDDSDNHDENDE.

Interacts with hairy/hry, p53 and Top1. Interacts with the gypsy chromatin insulator complex, composed of Cp190, mod(mdg4) and su(Hw); interacts directly with mod(mdg4) and su(Hw). Interacts with Lam/lamin.

It localises to the nucleus. It is found in the chromosome. It carries out the reaction S-ubiquitinyl-[E2 ubiquitin-conjugating enzyme]-L-cysteine + [acceptor protein]-L-lysine = [E2 ubiquitin-conjugating enzyme]-L-cysteine + N(6)-ubiquitinyl-[acceptor protein]-L-lysine.. Its function is as follows. Functions as a ubiquitin-protein E3 ligase. Negatively regulates the transcriptional repressor hairy/hry by promoting its ubiquitination and subsequent degradation. Also directs the nuclear organization of the gypsy chromatin insulator. Chromatin insulators are regulatory elements which establish independent domains of transcriptional activity within eukaryotic genomes. Insulators have two defining properties; they can block the communication between an enhancer and a promoter when placed between them, and can also buffer transgenes from position effect variegation (PEV). Insulators are proposed to structure the chromatin fiber into independent domains of differing transcriptional potential by promoting the formation of distinct chromatin loops. This chromatin looping may require the formation of insulator bodies, where homotypic interactions between individual subunits of the insulator complex could promote the clustering of widely spaced insulators at the nuclear periphery. Within the gypsy insulator complex, this protein may promote formation of nuclear insulator bodies by recruiting individual insulator complexes to the nuclear lamina. The sequence is that of E3 ubiquitin-protein ligase Topors (Topors) from Drosophila melanogaster (Fruit fly).